A 299-amino-acid polypeptide reads, in one-letter code: Taste receptor type 2 member 16 (299 aa).

The Extracellular segment spans residues 1-5 (MVPTQ). Residues 6-26 (VTIFSIIMYVLESLVIIVQSC) traverse the membrane as a helical segment. The Cytoplasmic portion of the chain corresponds to 27–47 (TTVAVLFREWMHFQRLSPVET). The chain crosses the membrane as a helical span at residues 48-68 (ILISLGISHFCLQWTSMLYNF). The Extracellular segment spans residues 69–82 (GTYSRPVLLFWKVS). The helical transmembrane segment at 83 to 103 (VVWEFMNILTFWLTSWLAVLY) threads the bilayer. Residues 104 to 125 (CVKVSSFTHPIFLWLRMKILKL) lie on the Cytoplasmic side of the membrane. Residues 126 to 146 (VLWLILGALIASCLSIIPSVV) form a helical membrane-spanning segment. Residues 147–183 (KYHIQMELVTLDNLPKNNSLILRLQQFEWYFSNPLKM) lie on the Extracellular side of the membrane. N163 is a glycosylation site (N-linked (GlcNAc...) asparagine). Residues 184–204 (IGFGIPFFVFLASIILLTVSL) traverse the membrane as a helical segment. At 205-233 (VQHWVQMKHYSSSNSSLKAQFTVLKSLAT) the chain is on the cytoplasmic side. The chain crosses the membrane as a helical span at residues 234-254 (FFTFFTSYFLTIVISFIGTVF). The Extracellular portion of the chain corresponds to 255-258 (DKKS). The chain crosses the membrane as a helical span at residues 259-279 (WFWVCEAVIYGLVCIHFTSLM). The Cytoplasmic portion of the chain corresponds to 280–299 (MSNPALKKALKLQFWSPEPS).

It belongs to the G-protein coupled receptor T2R family. Interacts with RTP3 and RTP4.

The protein localises to the cell membrane. Gustducin-coupled receptor implicated in the perception of bitter compounds in the oral cavity and the gastrointestinal tract. Signals through PLCB2 and the calcium-regulated cation channel TRPM5. This is Taste receptor type 2 member 16 (Tas2r16) from Mus musculus (Mouse).